A 518-amino-acid polypeptide reads, in one-letter code: Protein translocase subunit SecD (518 aa).

Transmembrane regions (helical) follow at residues 9 to 29 (IFLS…NFMQ), 361 to 381 (LIGF…LGLF), 384 to 404 (IALS…QATL), 406 to 426 (LPGI…NVLI), 452 to 474 (FATI…IFGV), and 486 to 506 (IGII…IDIW).

This sequence belongs to the SecD/SecF family. SecD subfamily. In terms of assembly, forms a complex with SecF. Part of the essential Sec protein translocation apparatus which comprises SecA, SecYEG and auxiliary proteins SecDF-YajC and YidC.

It is found in the cell inner membrane. Functionally, part of the Sec protein translocase complex. Interacts with the SecYEG preprotein conducting channel. SecDF uses the proton motive force (PMF) to complete protein translocation after the ATP-dependent function of SecA. This chain is Protein translocase subunit SecD, found in Rickettsia felis (strain ATCC VR-1525 / URRWXCal2) (Rickettsia azadi).